Here is a 326-residue protein sequence, read N- to C-terminus: MEEPNAAPLPSRLARLLSALFYGTCSFLIVLVNKALLTTYGFPSPIVLGIGQMATTIMILYVFKLNKIIHFPDFDKKIPGKLFPLPLLYVGNHISGLSSTSKLSLPMFTVLRKFTIPFTLLLEAIILGTQYSLNIILSVLAIVLGAFIAAGSDLTFNLEGYVFVFLNDIFTAANGVYTKQKMDPKELGKYGVLFYNACFMLIPTVIISVSTGDFQQATEFRHWKNVLFIIQFLLSCLLGFLLMYSTALCSYYNSALTTAVVGAIKNVSVAYIGMLVGGDYIFSLLNFIGLNICMAGGLRYSFLTLSSQLKPKQPVDEESIPLDLKS.

The Extracellular portion of the chain corresponds to 1-15; that stretch reads MEEPNAAPLPSRLAR. The chain crosses the membrane as a helical span at residues 16 to 36; the sequence is LLSALFYGTCSFLIVLVNKAL. Over 37–41 the chain is Cytoplasmic; it reads LTTYG. The chain crosses the membrane as a helical span at residues 42–62; that stretch reads FPSPIVLGIGQMATTIMILYV. Over 63-130 the chain is Extracellular; sequence FKLNKIIHFP…LLEAIILGTQ (68 aa). A helical membrane pass occupies residues 131–151; it reads YSLNIILSVLAIVLGAFIAAG. Residues 152 to 155 are Cytoplasmic-facing; it reads SDLT. Residues 156–176 traverse the membrane as a helical segment; it reads FNLEGYVFVFLNDIFTAANGV. Over 177–189 the chain is Extracellular; it reads YTKQKMDPKELGK. A helical membrane pass occupies residues 190–210; that stretch reads YGVLFYNACFMLIPTVIISVS. Residues 211–225 lie on the Cytoplasmic side of the membrane; sequence TGDFQQATEFRHWKN. Residues 226–246 traverse the membrane as a helical segment; the sequence is VLFIIQFLLSCLLGFLLMYST. The Extracellular segment spans residues 247–253; the sequence is ALCSYYN. The chain crosses the membrane as a helical span at residues 254–276; it reads SALTTAVVGAIKNVSVAYIGMLV. Residues 277-280 lie on the Cytoplasmic side of the membrane; it reads GGDY. A helical membrane pass occupies residues 281–303; the sequence is IFSLLNFIGLNICMAGGLRYSFL. Residues 304–326 are Extracellular-facing; it reads TLSSQLKPKQPVDEESIPLDLKS.

This sequence belongs to the TPT transporter family. SLC35D subfamily.

It localises to the golgi apparatus membrane. It catalyses the reaction UMP(out) + UDP-N-acetyl-alpha-D-glucosamine(in) = UMP(in) + UDP-N-acetyl-alpha-D-glucosamine(out). The enzyme catalyses UMP(out) + UDP-alpha-D-glucose(in) = UMP(in) + UDP-alpha-D-glucose(out). Its function is as follows. Nucleotide sugar antiporter transporting UDP-N-acetylglucosamine (UDP-GlcNAc) and UDP-glucose (UDP-Glc) from the cytosol into the lumen of the Golgi in exchange of UMP. By supplying UDP-N-acetylglucosamine, a donor substrate to heparan sulfate synthases, probably takes part in the synthesis of these glycoconjugates. The chain is Nucleotide sugar transporter SLC35D2 from Mus musculus (Mouse).